The sequence spans 149 residues: Probable cyclic pyranopterin monophosphate synthase (149 aa).

Substrate-binding positions include 67–69 and 103–104; these read LCH and ME. Asp118 is an active-site residue.

Belongs to the MoaC family. In terms of assembly, homohexamer; trimer of dimers.

The enzyme catalyses (8S)-3',8-cyclo-7,8-dihydroguanosine 5'-triphosphate = cyclic pyranopterin phosphate + diphosphate. Its pathway is cofactor biosynthesis; molybdopterin biosynthesis. Functionally, catalyzes the conversion of (8S)-3',8-cyclo-7,8-dihydroguanosine 5'-triphosphate to cyclic pyranopterin monophosphate (cPMP). The chain is Probable cyclic pyranopterin monophosphate synthase from Saccharolobus solfataricus (strain ATCC 35092 / DSM 1617 / JCM 11322 / P2) (Sulfolobus solfataricus).